A 353-amino-acid polypeptide reads, in one-letter code: UPF0283 membrane protein YcjF (353 aa).

Transmembrane regions (helical) follow at residues 70-90 (MVMGGLALFGASVVGQGVQWT), 100-120 (VALGGCAAGALIIGAGVGSVV), and 213-233 (ESTLMIAVSPLALVDMAFIAW).

This sequence belongs to the UPF0283 family.

The protein localises to the cell inner membrane. The protein is UPF0283 membrane protein YcjF of Escherichia coli O45:K1 (strain S88 / ExPEC).